A 452-amino-acid chain; its full sequence is Probable pectate lyase 9 (452 aa).

The signal sequence occupies residues 1-25 (MATSSLKLTSACFVLLFIFVGCVLT). 4 N-linked (GlcNAc...) asparagine glycosylation sites follow: Asn-88, Asn-139, Asn-214, and Asn-233. Asp-250 is a binding site for Ca(2+). N-linked (GlcNAc...) asparagine glycosylation occurs at Asn-271. Asp-274 and Asp-278 together coordinate Ca(2+). N-linked (GlcNAc...) asparagine glycans are attached at residues Asn-281 and Asn-305. Residue Arg-330 is part of the active site. Residue Asn-374 is glycosylated (N-linked (GlcNAc...) asparagine).

It belongs to the polysaccharide lyase 1 family. It depends on Ca(2+) as a cofactor.

The enzyme catalyses Eliminative cleavage of (1-&gt;4)-alpha-D-galacturonan to give oligosaccharides with 4-deoxy-alpha-D-galact-4-enuronosyl groups at their non-reducing ends.. It functions in the pathway glycan metabolism; pectin degradation; 2-dehydro-3-deoxy-D-gluconate from pectin: step 2/5. The protein is Probable pectate lyase 9 of Arabidopsis thaliana (Mouse-ear cress).